The chain runs to 144 residues: Large ribosomal subunit protein uL15 (144 aa).

A disordered region spans residues 1–57 (MKLNDLSPAPGSRREKHRPGRGIGSGLGKTGGRGHKGQSSRSGGTIAPGFEGGQQPL). Over residues 21 to 31 (RGIGSGLGKTG) the composition is skewed to gly residues.

This sequence belongs to the universal ribosomal protein uL15 family. Part of the 50S ribosomal subunit.

In terms of biological role, binds to the 23S rRNA. This chain is Large ribosomal subunit protein uL15, found in Pseudomonas savastanoi pv. phaseolicola (strain 1448A / Race 6) (Pseudomonas syringae pv. phaseolicola (strain 1448A / Race 6)).